We begin with the raw amino-acid sequence, 359 residues long: Cytochrome c oxidase subunit 2 (359 aa).

A signal peptide spans 1-28 (MEQQNKRGLKRKALLGGVLGSGGLAMAG). Cys-29 carries N-palmitoyl cysteine lipidation. Cys-29 is lipidated: S-diacylglycerol cysteine. Helical transmembrane passes span 64–84 (VWVA…TAIF) and 107–127 (VPLE…LFFF). Residues His-244, Cys-285, Glu-287, Cys-289, His-293, and Met-296 each contribute to the Cu cation site. The interval 338-359 (STAPFVSDRTGTRDGENFQTPA) is disordered.

The protein belongs to the cytochrome c oxidase subunit 2 family. As to quaternary structure, associates with subunits I, III and IV to form cytochrome c oxidase. The cofactor is binuclear copper center (CuA).

It is found in the cell membrane. It catalyses the reaction 4 Fe(II)-[cytochrome c] + O2 + 8 H(+)(in) = 4 Fe(III)-[cytochrome c] + 2 H2O + 4 H(+)(out). Subunits I and II form the functional core of the enzyme complex. Electrons originating in cytochrome c are transferred via heme a and Cu(A) to the binuclear center formed by heme a3 and Cu(B). The chain is Cytochrome c oxidase subunit 2 (ctaC) from Corynebacterium efficiens (strain DSM 44549 / YS-314 / AJ 12310 / JCM 11189 / NBRC 100395).